Here is a 93-residue protein sequence, read N- to C-terminus: Acylphosphatase (93 aa).

The Acylphosphatase-like domain occupies 5 to 93; the sequence is TAILRVTGFV…EERKTFDIVY (89 aa). Catalysis depends on residues Arg-20 and Asn-38.

This sequence belongs to the acylphosphatase family.

The enzyme catalyses an acyl phosphate + H2O = a carboxylate + phosphate + H(+). The polypeptide is Acylphosphatase (acyP) (Listeria monocytogenes serotype 4b (strain F2365)).